Here is a 341-residue protein sequence, read N- to C-terminus: S-adenosylmethionine:tRNA ribosyltransferase-isomerase (341 aa).

It belongs to the QueA family. As to quaternary structure, monomer.

It is found in the cytoplasm. It catalyses the reaction 7-aminomethyl-7-carbaguanosine(34) in tRNA + S-adenosyl-L-methionine = epoxyqueuosine(34) in tRNA + adenine + L-methionine + 2 H(+). It functions in the pathway tRNA modification; tRNA-queuosine biosynthesis. Functionally, transfers and isomerizes the ribose moiety from AdoMet to the 7-aminomethyl group of 7-deazaguanine (preQ1-tRNA) to give epoxyqueuosine (oQ-tRNA). This Alkaliphilus metalliredigens (strain QYMF) protein is S-adenosylmethionine:tRNA ribosyltransferase-isomerase.